The sequence spans 157 residues: Probable succinate transporter subunit YjjB (157 aa).

Transmembrane regions (helical) follow at residues 8-28 (FALAQDMILAAIPAVGFAMVF), 50-70 (MILMTSGLNIEWSTFMASMLV), 87-107 (VFTVAAVIPMFPGISAYTAMI), and 129-149 (FLTASSIVGALSIGLSIPGLW).

It belongs to the ThrE exporter (TC 2.A.79) family. The transporter is composed of YjjB and YjjP.

Its subcellular location is the cell inner membrane. Involved in succinate export with YjjP. Both proteins are required for export. This is Probable succinate transporter subunit YjjB from Escherichia coli (strain ATCC 8739 / DSM 1576 / NBRC 3972 / NCIMB 8545 / WDCM 00012 / Crooks).